Consider the following 230-residue polypeptide: Orotidine 5'-phosphate decarboxylase (230 aa).

Residues D11, K34, 61-70 (DLKLHDIPNT), T117, R179, Q188, G208, and R209 contribute to the substrate site. K63 (proton donor) is an active-site residue.

It belongs to the OMP decarboxylase family. Type 1 subfamily. As to quaternary structure, homodimer.

The catalysed reaction is orotidine 5'-phosphate + H(+) = UMP + CO2. It functions in the pathway pyrimidine metabolism; UMP biosynthesis via de novo pathway; UMP from orotate: step 2/2. Catalyzes the decarboxylation of orotidine 5'-monophosphate (OMP) to uridine 5'-monophosphate (UMP). The protein is Orotidine 5'-phosphate decarboxylase of Streptococcus mutans serotype c (strain ATCC 700610 / UA159).